Here is a 598-residue protein sequence, read N- to C-terminus: Major royal jelly protein 5 (598 aa).

The N-terminal stretch at 1–17 is a signal peptide; that stretch reads MTTWLLLVVCLGIACQG. Residues N148, N164, N181, and N324 are each glycosylated (N-linked (GlcNAc...) asparagine).

Belongs to the major royal jelly protein family. Found in and secreted from the hypopharyngeal glands of the worker honey bee (at protein level); expression peaks at 8 days post eclosion. Expressed in the brains of adult worker bees peaking at 12 days post eclosion (at protein level). Expressed in the spermatheca of adult queen bees (at protein level); Expression levels are higher in mated queens than in virgin queens. Expressed in the heads of worker bees after eclosion, expression dropping with age and detectable up to 26 days of age.

The protein localises to the secreted. Its function is as follows. Component of royal jelly, a substance produced in the hypopharyngeal gland containing proteins, free amino acids, fatty acids, sugars and other nutrients, which is fed to developing larvae by worker nurse bees. Major royal jelly proteins (MRJPs) are high in essential amino acids and probably have a nutritional function in larval food. All larvae are fed some royal jelly (also known as worker jelly) early in their development but it forms the principal source of nutrition for larvae destined to become queen bees. Produced in the spermatheca of adult queen bees, along with other major royal jelly proteins, where it may act as a nutrient supply for sperm stored by mated queens, or be involved in energy metabolism. The sequence is that of Major royal jelly protein 5 from Apis mellifera (Honeybee).